We begin with the raw amino-acid sequence, 214 residues long: MQFSLSIATAILAATASAMPVLETRQTVGTTANEFTSGGCKDVVLLYARGTTQAGNMGQEPGPELGNALKARLGAARVAVQGVAYSASLLGNLNPGGAPANEATSFRTLIGQVASQCPNARIVVSGYSQGAALVHRAVEGATAAVRARIAAGVTFGDTQKQQDGGRIPGLDASKTLIICNTGDRVCEGTLIITAAHSGYGARAGEAVDFIAARV.

The first 18 residues, 1–18 (MQFSLSIATAILAATASA), serve as a signal peptide directing secretion. The cysteines at positions 40 and 117 are disulfide-linked. The active-site Nucleophile is S128. C179 and C186 form a disulfide bridge. D183 is an active-site residue. H196 functions as the Proton donor/acceptor in the catalytic mechanism.

Belongs to the cutinase family. Post-translationally, the 2 disulfide bonds play a critical role in holding the catalytic residues in juxta-position; reduction of the disulfide bridges results in the complete inactivation of the enzyme.

It is found in the secreted. The enzyme catalyses cutin + H2O = cutin monomers.. Its function is as follows. Catalyzes the hydrolysis of complex carboxylic polyesters found in the cell wall of plants. Degrades cutin, a macromolecule that forms the structure of the plant cuticle. Required for efficient penetration of the host plant cuticle by the appressorium during the initial stage of fungal infection. The sequence is that of Cutinase CUT2 from Pyricularia oryzae (strain 70-15 / ATCC MYA-4617 / FGSC 8958) (Rice blast fungus).